The sequence spans 122 residues: Large ribosomal subunit protein uL29A (122 aa).

The stretch at 10-69 (QLGIKQIEERAAEIKADLAALRQKKNSGDVGANDIKTAKKNLARALTVRREKILEELVEA) forms a coiled coil.

Belongs to the universal ribosomal protein uL29 family. In terms of assembly, component of the large ribosomal subunit.

Its subcellular location is the cytoplasm. This chain is Large ribosomal subunit protein uL29A (RPL35A), found in Encephalitozoon cuniculi (strain GB-M1) (Microsporidian parasite).